The chain runs to 633 residues: MAAAAAAATTAACSSGSAGTDAAGASGLQQPPPQPQPQPAAAAPAQPPPEPPRKPRMDPRRRQAALSFLTNISLDGRLPPQDAEWGGGEEGGAAKPGAGGACGARTRFSLLAAAERGGCIALAAPGTPAAGLAAGSGPCLPQPSSLPPLIPGGHATVSGPGVARGFASPLGAGRASGEQWQPPRPAPLAACAQLQLLDGSGAAGQEELEEDDAFISVQVPAAAFLGSGTPGSGSGSRGRLNSFTQGILPIAFSRPTSQNYCSLEQPGQGGSTSAFEQLQRSRRRLISQRSSLETLEDIEENAPLRRCRTLSGSPRPKNFKKIHFIKNMRQHDTRNGRIVLISGRRSFCSIFSVLPYRDSTQVGDLKLDGGRQSTGAVSLKEIIGLEGVELGADGKTVSYTQFLLPTNAFGARRNTIDSTSSFSQFRNLSHRSLSIGRASGTQGSLDTGSDLGDFMDYDPNLLDDPQWPCGKHKRVLIFPSYMTTVIDYVKPSDLKKDMNETFKEKFPHIKLTLSKIRSLKREMRKLAQEDCGLEEPTVAMAFVYFEKLALKGKLNKQNRKLCAGACVLLAAKIGSDLKKHEVKHLIDKLEEKFRLNRRELIAFEFPVLVALEFALHLPEHEVMPHYRRLVQSS.

Positions 1-29 (MAAAAAAATTAACSSGSAGTDAAGASGLQ) are enriched in low complexity. A disordered region spans residues 1–99 (MAAAAAAATT…EGGAAKPGAG (99 aa)). Residues 1-109 (MAAAAAAATT…GACGARTRFS (109 aa)) are interaction with TDRD7. Positions 51–61 (PPRKPRMDPRR) are enriched in basic and acidic residues. 2 positions are modified to phosphoserine: S168 and S287. The segment at 179–492 (QWQPPRPAPL…TTVIDYVKPS (314 aa)) is interaction with CDK3. At S313 the chain carries Phosphoserine; by CDK2 and CDK3. At T415 the chain carries Phosphothreonine.

It belongs to the cyclin family. Found in a complex with p53/TP53. Found in a number of complexes with CDK2, CDK3, CDK5, ABL1, TDRD7, CDK17, CCNA1, CCNE1 and TP73. Interacts with CDK2, CDK3, CDK5, ABL1 and TDRD7. Post-translationally, phosphorylated on Ser-313 by CCNE1/CDK3. Phosphorylated on serine/threonine residues by CDK5 and on tyrosine residues by ABL1. Also phosphorylated in vitro by CCNA1/CDK2, CCNE1/CDK2, CCNA1/CDK3 and CCNE1/CDK3. Expressed in breast, pancreas, colon, head and neck (at protein level). Strongly decreased in more than half of cases of atypical endometrial hyperplasia and in more than 90% of endometrial cancers.

It is found in the nucleus. The protein resides in the cytoplasm. Cyclin-dependent kinase binding protein. Enhances cyclin-dependent kinase tyrosine phosphorylation by nonreceptor tyrosine kinases, such as that of CDK5 by activated ABL1, which leads to increased CDK5 activity and is critical for neuronal development, and that of CDK2 by WEE1, which leads to decreased CDK2 activity and growth inhibition. Positively affects neuronal outgrowth. Plays a role as a regulator for p53/p73-induced cell death. The sequence is that of CDK5 and ABL1 enzyme substrate 1 (CABLES1) from Homo sapiens (Human).